The chain runs to 366 residues: Galactoside alpha-(1,2)-fucosyltransferase 1 (366 aa).

The Cytoplasmic segment spans residues 1–8; that stretch reads MWPLSHRH. The chain crosses the membrane as a helical; Signal-anchor for type II membrane protein span at residues 9–25; sequence LCLAFLLVCVLSAISFF. Residues 26–366 lie on the Lumenal side of the membrane; it reads LHIHQDSIRH…LSPLWTLAEP (341 aa). N-linked (GlcNAc...) asparagine glycosylation is found at N66, N302, and N328.

Belongs to the glycosyltransferase 11 family.

Its subcellular location is the golgi apparatus. The protein localises to the golgi stack membrane. It catalyses the reaction a beta-D-galactosyl-(1-&gt;4)-N-acetyl-beta-D-glucosaminyl derivative + GDP-beta-L-fucose = an alpha-L-Fuc-(1-&gt;2)-beta-D-Gal-(1-&gt;4)-beta-D-GlcNAc derivative + GDP + H(+). The catalysed reaction is a ganglioside GA1 + GDP-beta-L-fucose = a ganglioside Fuc-GA1 + GDP + H(+). It carries out the reaction a beta-D-Gal-(1-&gt;3)-beta-D-GlcNAc-(1-&gt;3)-beta-D-Gal-(1-&gt;4)-beta-D-Glc-(1&lt;-&gt;1')-Cer(d18:1(4E)) + GDP-beta-L-fucose = alpha-L-fucosyl-(1-&gt;2)- beta-D-galactosyl-(1-&gt;3)-N-acetyl-beta-D-glucosaminyl-(1-&gt;3)-beta-D-galactosyl-(1-&gt;4)-beta-D-glucosyl-(1&lt;-&gt;1')-N-acylsphing-4-enine + GDP + H(+). The enzyme catalyses a neolactoside nLc4Cer(d18:1(4E)) + GDP-beta-L-fucose = a neolactoside IV(2)-alpha-Fuc-nLc4Cer(d18:1(4E)) + GDP + H(+). It catalyses the reaction a ganglioside GM1 + GDP-beta-L-fucose = a ganglioside Fuc-GM1 + GDP + H(+). The catalysed reaction is beta-D-galactosyl-(1-&gt;3)-N-acetyl-D-galactosamine + GDP-beta-L-fucose = alpha-L-fucosyl-(1-&gt;2)-beta-D-galactosyl-(1-&gt;3)-N-acetyl-D-galactosamine + GDP + H(+). It functions in the pathway protein modification; protein glycosylation. Its function is as follows. Catalyzes the transfer of L-fucose, from a guanosine diphosphate-beta-L-fucose, to the terminal galactose residue of glycoconjugates through an alpha(1,2) linkage leading to H antigen synthesis that is an intermediate substrate in the synthesis of ABO blood group antigens. H antigen is essential for maturation of the glomerular layer of the main olfactory bulb, in cell migration and early cell-cell contacts during tumor associated angiogenesis. Preferentially fucosylates soluble lactose and to a lesser extent fucosylates glycolipids gangliosides GA1 and GM1a. The protein is Galactoside alpha-(1,2)-fucosyltransferase 1 of Aotus azarae (Azara's night monkey).